A 562-amino-acid polypeptide reads, in one-letter code: Isochorismate synthase 2, chloroplastic (562 aa).

The transit peptide at M1–E55 directs the protein to the chloroplast.

This sequence belongs to the isochorismate synthase family. Mg(2+) serves as cofactor.

It localises to the plastid. It is found in the chloroplast. The catalysed reaction is chorismate = isochorismate. Its pathway is siderophore biosynthesis; salicylate biosynthesis. Functionally, isochorismate synthase involved in the synthesis of salicylic acid (SA) required for both local and systemic acquired resistance (LAR and SAR) while SA synthesized through the phenylalanine ammonium lyase (PAL) pathway seems to potentiate plant cell death. Also involved in phylloquinone (vitamin K1) synthesis. Has no isochorismate pyruvate lyase (IPL) activity. The polypeptide is Isochorismate synthase 2, chloroplastic (ICS2) (Arabidopsis thaliana (Mouse-ear cress)).